A 548-amino-acid chain; its full sequence is 1,3-beta-glucanosyltransferase gel4 (548 aa).

The first 25 residues, 1-25 (MKFVYAAAGASLVGSALATLPVIEA), serve as a signal peptide directing secretion. Residues N51 and N69 are each glycosylated (N-linked (GlcNAc...) asparagine). A disulfide bridge connects residues C88 and C117. (1,3-beta-D-glucosyl)n contacts are provided by residues Y106, 133 to 141 (SAPSESINR), N174, and E175. The Proton donor role is filled by E175. Residue N181 is glycosylated (N-linked (GlcNAc...) asparagine). Residues D217 and R222 each contribute to the (1,3-beta-D-glucosyl)n site. 5 cysteine pairs are disulfide-bonded: C231–C364, C249–C280, C386–C437, C395–C461, and C414–C419. E277 (nucleophile) is an active-site residue. Y309 contacts (1,3-beta-D-glucosyl)n. An N-linked (GlcNAc...) asparagine glycan is attached at N425. A519 carries the GPI-like-anchor amidated alanine lipid modification. The propeptide at 520–548 (SPMAVKVGNWQFGAYIATALFAGVGMLVL) is removed in mature form.

This sequence belongs to the glycosyl hydrolase 72 family. The GPI-like anchor contains a phosphoceramide lipid group.

The protein localises to the cell membrane. Its function is as follows. Splits internally a 1,3-beta-glucan molecule and transfers the newly generated reducing end (the donor) to the non-reducing end of another 1,3-beta-glucan molecule (the acceptor) forming a 1,3-beta linkage, resulting in the elongation of 1,3-beta-glucan chains in the cell wall. Involved in cell wall morphogenesis. The chain is 1,3-beta-glucanosyltransferase gel4 (gel4) from Aspergillus fumigatus (strain ATCC MYA-4609 / CBS 101355 / FGSC A1100 / Af293) (Neosartorya fumigata).